The following is a 300-amino-acid chain: Ornithine carbamoyltransferase (300 aa).

Residues 50-53, Gln-77, Arg-101, and 128-131 each bind carbamoyl phosphate; these read STRT and HPCQ. Residues Asn-159, Asp-219, and 223 to 224 contribute to the L-ornithine site; that span reads SM. Carbamoyl phosphate contacts are provided by residues 257–258 and Arg-285; that span reads CL.

It belongs to the aspartate/ornithine carbamoyltransferase superfamily. OTCase family.

It is found in the cytoplasm. It catalyses the reaction carbamoyl phosphate + L-ornithine = L-citrulline + phosphate + H(+). It functions in the pathway amino-acid degradation; L-arginine degradation via ADI pathway; carbamoyl phosphate from L-arginine: step 2/2. Its function is as follows. Reversibly catalyzes the transfer of the carbamoyl group from carbamoyl phosphate (CP) to the N(epsilon) atom of ornithine (ORN) to produce L-citrulline. This chain is Ornithine carbamoyltransferase, found in Haloquadratum walsbyi (strain DSM 16790 / HBSQ001).